The primary structure comprises 837 residues: Protein translocase subunit SecA (837 aa).

Residues glutamine 85, 103 to 107 (GEGKT), and aspartate 493 contribute to the ATP site. Residues cysteine 821, cysteine 823, cysteine 832, and histidine 833 each coordinate Zn(2+).

The protein belongs to the SecA family. Monomer and homodimer. Part of the essential Sec protein translocation apparatus which comprises SecA, SecYEG and auxiliary proteins SecDF. Other proteins may also be involved. Zn(2+) is required as a cofactor.

It localises to the cell membrane. The protein localises to the cytoplasm. The catalysed reaction is ATP + H2O + cellular proteinSide 1 = ADP + phosphate + cellular proteinSide 2.. Functionally, part of the Sec protein translocase complex. Interacts with the SecYEG preprotein conducting channel. Has a central role in coupling the hydrolysis of ATP to the transfer of proteins into and across the cell membrane, serving as an ATP-driven molecular motor driving the stepwise translocation of polypeptide chains across the membrane. In Streptococcus pneumoniae (strain Taiwan19F-14), this protein is Protein translocase subunit SecA.